The chain runs to 109 residues: Large ribosomal subunit protein uL24 (109 aa).

This sequence belongs to the universal ribosomal protein uL24 family. Part of the 50S ribosomal subunit.

In terms of biological role, one of two assembly initiator proteins, it binds directly to the 5'-end of the 23S rRNA, where it nucleates assembly of the 50S subunit. Functionally, one of the proteins that surrounds the polypeptide exit tunnel on the outside of the subunit. This chain is Large ribosomal subunit protein uL24, found in Legionella pneumophila (strain Paris).